Here is a 385-residue protein sequence, read N- to C-terminus: Chaperone protein DnaJ (385 aa).

Residues 5 to 70 enclose the J domain; the sequence is DFYDVLGVSR…QSRAAYDQFG (66 aa). A CR-type zinc finger spans residues 143-221; sequence GKKAQVRVPG…CHGAGRVEKE (79 aa). Zn(2+) is bound by residues Cys156, Cys159, Cys173, Cys176, Cys195, Cys198, Cys209, and Cys212. CXXCXGXG motif repeat units lie at residues 156 to 163, 173 to 180, 195 to 202, and 209 to 216; these read CEVCTGTG, CPTCQGHG, CPTCHGRG, and CTNCHGAG.

It belongs to the DnaJ family. Homodimer. Zn(2+) serves as cofactor.

It is found in the cytoplasm. Its function is as follows. Participates actively in the response to hyperosmotic and heat shock by preventing the aggregation of stress-denatured proteins and by disaggregating proteins, also in an autonomous, DnaK-independent fashion. Unfolded proteins bind initially to DnaJ; upon interaction with the DnaJ-bound protein, DnaK hydrolyzes its bound ATP, resulting in the formation of a stable complex. GrpE releases ADP from DnaK; ATP binding to DnaK triggers the release of the substrate protein, thus completing the reaction cycle. Several rounds of ATP-dependent interactions between DnaJ, DnaK and GrpE are required for fully efficient folding. Also involved, together with DnaK and GrpE, in the DNA replication of plasmids through activation of initiation proteins. This chain is Chaperone protein DnaJ, found in Parvibaculum lavamentivorans (strain DS-1 / DSM 13023 / NCIMB 13966).